The sequence spans 86 residues: Small ribosomal subunit protein eS27y (86 aa).

Residues 39-61 (CQGCFNITTVFSHSQTVVVCGNC) form a C4-type zinc finger.

It belongs to the eukaryotic ribosomal protein eS27 family. Zn(2+) is required as a cofactor.

Functionally, may be involved in the elimination of damaged mRNA after UV irradiation. This chain is Small ribosomal subunit protein eS27y (RPS27B), found in Arabidopsis thaliana (Mouse-ear cress).